A 226-amino-acid chain; its full sequence is PKHD-type hydroxylase PputW619_4316 (226 aa).

Residues 78–178 (KVFPPLINCY…RYAAFFWTQS (101 aa)) form the Fe2OG dioxygenase domain. His96, Asp98, and His159 together coordinate Fe cation. Residue Arg169 participates in 2-oxoglutarate binding.

Requires Fe(2+) as cofactor. L-ascorbate is required as a cofactor.

This is PKHD-type hydroxylase PputW619_4316 from Pseudomonas putida (strain W619).